The primary structure comprises 1072 residues: Serine/threonine-protein kinase 11-interacting protein (1072 aa).

8 LRR repeats span residues 109 to 130 (SLRQLELRGVPIHSLCGLRGIY), 132 to 152 (QLESLVCNRSIQALEELLSAC), 164 to 185 (ALLSADFSYNALRSLDSSLRLL), 187 to 209 (ALRFLNLSHNHLQDCKGFLMDLC), 210 to 231 (ELYHLDISYNHLRLVPRVGPSG), 233 to 254 (ALGTLILRANELRSLQGLEQLK), 255 to 276 (NLRHLDVAYNLLEGHTELAPLW), and 280 to 301 (ELRKLYLEGNPLWFHPAHRAAT). The segment at 333-366 (DSSGLGPVIQPLSWPVGSTTETSGGPELSDSLSS) is disordered. Serine 388, serine 390, and serine 393 each carry phosphoserine. The span at 441–454 (MGSSPLSTTKTPAL) shows a compositional bias: polar residues. 2 disordered regions span residues 441–522 (MGSS…EQKA) and 741–762 (RPDGIPPQTSISHDRSSWSLSP). Basic and acidic residues-rich tracts occupy residues 478-492 (KESPEKVSEEGRVEP) and 501-510 (EQDKEEGSRE). A phosphoserine mark is found at serine 757, serine 761, and serine 763. Residues 967-993 (HAESPLPVVSDETSEQPASLGPGPSLQ) form a disordered region.

This sequence belongs to the STK11IP family. As to quaternary structure, found in a ternary complex composed of STK11/LKB1, STK11IP and SMAD4. Interacts with SMAD4. Interacts with STK11/LKB1.

It is found in the cytoplasm. In terms of biological role, may regulate STK11/LKB1 function by controlling its subcellular localization. This chain is Serine/threonine-protein kinase 11-interacting protein (Stk11ip), found in Mus musculus (Mouse).